Here is an 830-residue protein sequence, read N- to C-terminus: Lon protease 3 (830 aa).

One can recognise a Lon N-terminal domain in the interval Val19–Ile213. Gly367–Thr374 provides a ligand contact to ATP. The Lon proteolytic domain maps to Arg604–Leu784. Catalysis depends on residues Ser690 and Lys733. The segment covering Pro811–Thr823 has biased composition (low complexity). Residues Pro811–Ala830 are disordered.

This sequence belongs to the peptidase S16 family. As to quaternary structure, homohexamer. Organized in a ring with a central cavity.

Its subcellular location is the cytoplasm. It carries out the reaction Hydrolysis of proteins in presence of ATP.. Functionally, ATP-dependent serine protease that mediates the selective degradation of mutant and abnormal proteins as well as certain short-lived regulatory proteins. Required for cellular homeostasis and for survival from DNA damage and developmental changes induced by stress. Degrades polypeptides processively to yield small peptide fragments that are 5 to 10 amino acids long. Binds to DNA in a double-stranded, site-specific manner. The polypeptide is Lon protease 3 (Sorangium cellulosum (strain So ce56) (Polyangium cellulosum (strain So ce56))).